Reading from the N-terminus, the 338-residue chain is Heat-inducible transcription repressor HrcA (338 aa).

It belongs to the HrcA family.

Negative regulator of class I heat shock genes (grpE-dnaK-dnaJ and groELS operons). Prevents heat-shock induction of these operons. The sequence is that of Heat-inducible transcription repressor HrcA from Bacillus thuringiensis (strain Al Hakam).